The sequence spans 320 residues: Aspartate carbamoyltransferase catalytic subunit (320 aa).

Carbamoyl phosphate is bound by residues Arg58 and Thr59. Lys86 is a binding site for L-aspartate. 3 residues coordinate carbamoyl phosphate: Arg108, His136, and Gln139. Positions 169 and 223 each coordinate L-aspartate. Residues Gly264 and Pro265 each coordinate carbamoyl phosphate.

This sequence belongs to the aspartate/ornithine carbamoyltransferase superfamily. ATCase family. In terms of assembly, heterododecamer (2C3:3R2) of six catalytic PyrB chains organized as two trimers (C3), and six regulatory PyrI chains organized as three dimers (R2).

It carries out the reaction carbamoyl phosphate + L-aspartate = N-carbamoyl-L-aspartate + phosphate + H(+). Its pathway is pyrimidine metabolism; UMP biosynthesis via de novo pathway; (S)-dihydroorotate from bicarbonate: step 2/3. Catalyzes the condensation of carbamoyl phosphate and aspartate to form carbamoyl aspartate and inorganic phosphate, the committed step in the de novo pyrimidine nucleotide biosynthesis pathway. The chain is Aspartate carbamoyltransferase catalytic subunit from Cereibacter sphaeroides (strain ATCC 17029 / ATH 2.4.9) (Rhodobacter sphaeroides).